Reading from the N-terminus, the 160-residue chain is Cytochrome b6-f complex subunit 4 (160 aa).

Transmembrane regions (helical) follow at residues 36–56, 95–115, and 131–151; these read LLYVFPVVIFGTIGLCTGLAI, LLGIACMAGVPLGLMLVPFIE, and AIFLFGTVVTIWLGIGATFPI.

Belongs to the cytochrome b family. PetD subfamily. The 4 large subunits of the cytochrome b6-f complex are cytochrome b6, subunit IV (17 kDa polypeptide, PetD), cytochrome f and the Rieske protein, while the 4 small subunits are PetG, PetL, PetM and PetN. The complex functions as a dimer.

Its subcellular location is the cellular thylakoid membrane. Functionally, component of the cytochrome b6-f complex, which mediates electron transfer between photosystem II (PSII) and photosystem I (PSI), cyclic electron flow around PSI, and state transitions. In Microcystis aeruginosa (strain NIES-843 / IAM M-2473), this protein is Cytochrome b6-f complex subunit 4.